Here is an 871-residue protein sequence, read N- to C-terminus: Zinc finger and BTB domain-containing protein 10 (871 aa).

Disordered stretches follow at residues 1-156 (MSFS…FNGR) and 177-228 (GASL…AGEG). Over residues 14 to 26 (RGGGLVTASGGGS) the composition is skewed to gly residues. The segment covering 27-37 (TNNNAGGEASA) has biased composition (low complexity). Pro residues predominate over residues 39 to 56 (PPQPQPRQPPPPAPPALQ). Acidic residues predominate over residues 65–76 (EEVELEGLEPQD). Residues 77-103 (LEASAGPAAGAAEEAKELLLPQDAGGP) are compositionally biased toward low complexity. At R126 the chain carries Omega-N-methylarginine. Gly residues predominate over residues 126 to 135 (RGGGGGGLGN). S210 is modified (phosphoserine). A Glycyl lysine isopeptide (Lys-Gly) (interchain with G-Cter in SUMO2) cross-link involves residue K245. Residues 364–433 (CDVSIVVSGK…LYSGNLVLTS (70 aa)) form the BTB domain. Glycyl lysine isopeptide (Lys-Gly) (interchain with G-Cter in SUMO2) cross-links involve residues K468, K483, and K497. Position 565 is a phosphoserine (S565). Residues K573, K672, K684, K696, and K706 each participate in a glycyl lysine isopeptide (Lys-Gly) (interchain with G-Cter in SUMO2) cross-link. 2 consecutive C2H2-type zinc fingers follow at residues 722–744 (LKCPHCSYVAKYRRTLKRHLLIH) and 750–772 (FSCDICGKLFTRREHVKRHSLVH). The disordered stretch occupies residues 812–871 (SQPGGQEGVDQGQDTEFPRDEEYEENEVGEADEELVDDGEDQNDPSRWDESGEVCMSLDD). Residues 830–854 (RDEEYEENEVGEADEELVDDGEDQN) show a composition bias toward acidic residues.

Its subcellular location is the nucleus. Its function is as follows. May be involved in transcriptional regulation. In Homo sapiens (Human), this protein is Zinc finger and BTB domain-containing protein 10 (ZBTB10).